The sequence spans 165 residues: MTLKSLFFLLLGLIITVLLDQAIKYWITHTMLLGTEIPLFPFISLYHVRNSGIAFSFFSSFSHWGLIALTITIIVFLFWLWKNTELDKALSRFGIVLIIGGAIGNLIDRIRFQAVTDYILFYIDGVFSFAIFNLADTFITLGAISILIDEFCIWIKTKRHLDKSK.

4 helical membrane-spanning segments follow: residues 7-27 (FFLL…KYWI), 28-48 (THTM…LYHV), 61-81 (FSHW…FWLW), and 87-107 (DKAL…GNLI). Residues Asp-117 and Asp-136 contribute to the active site. The helical transmembrane segment at 128-148 (SFAIFNLADTFITLGAISILI) threads the bilayer.

Belongs to the peptidase A8 family.

The protein resides in the cell inner membrane. The enzyme catalyses Release of signal peptides from bacterial membrane prolipoproteins. Hydrolyzes -Xaa-Yaa-Zaa-|-(S,diacylglyceryl)Cys-, in which Xaa is hydrophobic (preferably Leu), and Yaa (Ala or Ser) and Zaa (Gly or Ala) have small, neutral side chains.. It participates in protein modification; lipoprotein biosynthesis (signal peptide cleavage). This protein specifically catalyzes the removal of signal peptides from prolipoproteins. The polypeptide is Lipoprotein signal peptidase (Bartonella bacilliformis (strain ATCC 35685 / KC583 / Herrer 020/F12,63)).